The primary structure comprises 538 residues: MFS-type transporter tndD (538 aa).

The interval 1-42 (MSLSGSDSHLAVSPTLAEDMNSSDTSAGLAETPPADEEKRSI) is disordered. N21 and N71 each carry an N-linked (GlcNAc...) asparagine glycan. 11 helical membrane passes run 81 to 101 (VGIV…FAPG), 115 to 135 (LLAG…PLIL), 153 to 173 (ICFT…MLIA), 203 to 223 (GGVI…GPVA), 235 to 255 (WVFW…FLFL), 309 to 329 (PIVA…YLMF), 348 to 368 (GLTF…IGAV), 394 to 414 (LPPL…YGWS), 422 to 442 (IVPI…FMCI), 444 to 464 (SYLV…NTVV), and 485 to 505 (LGWG…IPWA).

This sequence belongs to the major facilitator superfamily.

Its subcellular location is the membrane. Functionally, MFS-type transporter; part of the gene cluster that mediates the biosynthesis of talaronoid C, a fusicoccane diterpenoid with an unprecedented tricyclic 5/8/6 ring system. The polypeptide is MFS-type transporter tndD (Aspergillus flavipes).